A 447-amino-acid chain; its full sequence is Imidazolonepropionase (447 aa).

Residues H85 and H87 each contribute to the Fe(3+) site. 2 residues coordinate Zn(2+): H85 and H87. Positions 94, 157, and 190 each coordinate 4-imidazolone-5-propanoate. Y157 is an N-formimidoyl-L-glutamate binding site. H255 is a Fe(3+) binding site. Position 255 (H255) interacts with Zn(2+). E258 contributes to the 4-imidazolone-5-propanoate binding site. D329 is a binding site for Fe(3+). D329 is a binding site for Zn(2+). Residues N331 and G333 each contribute to the N-formimidoyl-L-glutamate site. Position 334 (S334) interacts with 4-imidazolone-5-propanoate.

It belongs to the metallo-dependent hydrolases superfamily. HutI family. The cofactor is Zn(2+). Fe(3+) serves as cofactor.

It is found in the cytoplasm. It catalyses the reaction 4-imidazolone-5-propanoate + H2O = N-formimidoyl-L-glutamate. The protein operates within amino-acid degradation; L-histidine degradation into L-glutamate; N-formimidoyl-L-glutamate from L-histidine: step 3/3. Catalyzes the hydrolytic cleavage of the carbon-nitrogen bond in imidazolone-5-propanoate to yield N-formimidoyl-L-glutamate. It is the third step in the universal histidine degradation pathway. The sequence is that of Imidazolonepropionase from Shouchella clausii (strain KSM-K16) (Alkalihalobacillus clausii).